Here is a 213-residue protein sequence, read N- to C-terminus: 2-C-methyl-D-erythritol 4-phosphate cytidylyltransferase (213 aa).

The protein belongs to the IspD/TarI cytidylyltransferase family. IspD subfamily.

The enzyme catalyses 2-C-methyl-D-erythritol 4-phosphate + CTP + H(+) = 4-CDP-2-C-methyl-D-erythritol + diphosphate. It functions in the pathway isoprenoid biosynthesis; isopentenyl diphosphate biosynthesis via DXP pathway; isopentenyl diphosphate from 1-deoxy-D-xylulose 5-phosphate: step 2/6. Catalyzes the formation of 4-diphosphocytidyl-2-C-methyl-D-erythritol from CTP and 2-C-methyl-D-erythritol 4-phosphate (MEP). The chain is 2-C-methyl-D-erythritol 4-phosphate cytidylyltransferase from Thermus thermophilus (strain ATCC BAA-163 / DSM 7039 / HB27).